Consider the following 495-residue polypeptide: Glutamate--tRNA ligase (495 aa).

The 'HIGH' region signature appears at 12-22 (PSPTGHLHIGN). Positions 259-263 (KLSKR) match the 'KMSKS' region motif. Residue lysine 262 participates in ATP binding.

This sequence belongs to the class-I aminoacyl-tRNA synthetase family. Glutamate--tRNA ligase type 1 subfamily. In terms of assembly, monomer.

The protein localises to the cytoplasm. It catalyses the reaction tRNA(Glu) + L-glutamate + ATP = L-glutamyl-tRNA(Glu) + AMP + diphosphate. Catalyzes the attachment of glutamate to tRNA(Glu) in a two-step reaction: glutamate is first activated by ATP to form Glu-AMP and then transferred to the acceptor end of tRNA(Glu). The protein is Glutamate--tRNA ligase of Ligilactobacillus salivarius (strain UCC118) (Lactobacillus salivarius).